Consider the following 253-residue polypeptide: DNA repair protein RecO (253 aa).

The protein belongs to the RecO family.

In terms of biological role, involved in DNA repair and RecF pathway recombination. The protein is DNA repair protein RecO of Streptococcus agalactiae serotype Ia (strain ATCC 27591 / A909 / CDC SS700).